We begin with the raw amino-acid sequence, 208 residues long: MSPTKDSHPSPHFPRDSGIHAPTPPDSGALTLSPPVSQGPGVGPRTGRGNRLCRPPGRSAARSFCLLPGPPLGTGALGSPRAAQGLGFRGSGQRARHNSFTSPSPPGAHHPLGTHTRALPPPLARCPCAALLAGRECHGGPSPAAPRPLPGTSLTWPSRAPLPRPPPRERQGPGDRSPSPSAPSCPGVGASSPRRRKPREAAGLTPDG.

Over residues 1–18 (MSPTKDSHPSPHFPRDSG) the composition is skewed to basic and acidic residues. Disordered regions lie at residues 1–122 (MSPT…LPPP) and 135–208 (RECH…TPDG).

This is an uncharacterized protein from Homo sapiens (Human).